The following is a 416-amino-acid chain: Multifunctional CCA protein (416 aa).

Residues Gly8 and Arg11 each coordinate ATP. CTP-binding residues include Gly8 and Arg11. Mg(2+) is bound by residues Asp21 and Asp23. ATP-binding residues include Arg91, Arg137, and Arg140. CTP is bound by residues Arg91, Arg137, and Arg140. The HD domain maps to 228–329 (TGVHTLMVLA…VKIFDKADFW (102 aa)).

Belongs to the tRNA nucleotidyltransferase/poly(A) polymerase family. Bacterial CCA-adding enzyme type 1 subfamily. Monomer. Can also form homodimers and oligomers. Requires Mg(2+) as cofactor. The cofactor is Ni(2+).

It catalyses the reaction a tRNA precursor + 2 CTP + ATP = a tRNA with a 3' CCA end + 3 diphosphate. The enzyme catalyses a tRNA with a 3' CCA end + 2 CTP + ATP = a tRNA with a 3' CCACCA end + 3 diphosphate. Catalyzes the addition and repair of the essential 3'-terminal CCA sequence in tRNAs without using a nucleic acid template. Adds these three nucleotides in the order of C, C, and A to the tRNA nucleotide-73, using CTP and ATP as substrates and producing inorganic pyrophosphate. tRNA 3'-terminal CCA addition is required both for tRNA processing and repair. Also involved in tRNA surveillance by mediating tandem CCA addition to generate a CCACCA at the 3' terminus of unstable tRNAs. While stable tRNAs receive only 3'-terminal CCA, unstable tRNAs are marked with CCACCA and rapidly degraded. This chain is Multifunctional CCA protein, found in Shewanella baltica (strain OS223).